We begin with the raw amino-acid sequence, 277 residues long: Caspase-3 (277 aa).

Met-1 carries the N-acetylmethionine modification. Propeptides lie at residues 1–9 (MENNKTSVD) and 10–28 (SKSINNFEVKTIHGSKSVD). Position 11 is an N6-acetyllysine (Lys-11). Ser-26 is modified (phosphoserine). Catalysis depends on residues His-121 and Cys-163. S-nitrosocysteine; in inhibited form is present on Cys-163.

It belongs to the peptidase C14A family. In terms of assembly, heterotetramer that consists of two anti-parallel arranged heterodimers, each one formed by a 17 kDa (p17) and a 12 kDa (p12) subunit. Interacts with BIRC6/bruce. Cleavage by granzyme B, caspase-6, caspase-8 and caspase-10 generates the two active subunits. Additional processing of the propeptides is likely due to the autocatalytic activity of the activated protease. Active heterodimers between the small subunit of caspase-7 protease and the large subunit of caspase-3 also occur and vice versa. In terms of processing, S-nitrosylated on its catalytic site cysteine in unstimulated cell lines and denitrosylated upon activation of the Fas apoptotic pathway, associated with an increase in intracellular caspase activity. Fas therefore activates caspase-3 not only by inducing the cleavage of the caspase zymogen to its active subunits, but also by stimulating the denitrosylation of its active site thiol. Post-translationally, ubiquitinated by BIRC6; this activity is inhibited by DIABLO/SMAC. As to expression, highest expression in spleen, lung, liver, kidney and heart. Lower expression in brain, skeletal muscle and testis.

It is found in the cytoplasm. The enzyme catalyses Strict requirement for an Asp residue at positions P1 and P4. It has a preferred cleavage sequence of Asp-Xaa-Xaa-Asp-|- with a hydrophobic amino-acid residue at P2 and a hydrophilic amino-acid residue at P3, although Val or Ala are also accepted at this position.. Its activity is regulated as follows. Inhibited by BIRC6; following inhibition of BIRC6-caspase binding by DIABLO/SMAC, BIRC6 is subjected to caspase cleavage, leading to an increase in active caspases. Its function is as follows. Thiol protease that acts as a major effector caspase involved in the execution phase of apoptosis. Following cleavage and activation by initiator caspases (CASP8, CASP9 and/or CASP10), mediates execution of apoptosis by catalyzing cleavage of many proteins. At the onset of apoptosis, it proteolytically cleaves poly(ADP-ribose) polymerase PARP1 at a '216-Asp-|-Gly-217' bond. Cleaves and activates sterol regulatory element binding proteins (SREBPs) between the basic helix-loop-helix leucine zipper domain and the membrane attachment domain. Cleaves and activates caspase-6, -7 and -9 (CASP6, CASP7 and CASP9, respectively). Cleaves and inactivates interleukin-18 (IL18). Triggers cell adhesion in sympathetic neurons through RET cleavage. Cleaves IL-1 beta between an Asp and an Ala, releasing the mature cytokine which is involved in a variety of inflammatory processes. Cleaves and inhibits serine/threonine-protein kinase AKT1 in response to oxidative stress. Acts as an inhibitor of type I interferon production during virus-induced apoptosis by mediating cleavage of antiviral proteins CGAS, IRF3 and MAVS, thereby preventing cytokine overproduction. Also involved in pyroptosis by mediating cleavage and activation of gasdermin-E (GSDME). Cleaves XRCC4 and phospholipid scramblase proteins XKR4, XKR8 and XKR9, leading to promote phosphatidylserine exposure on apoptotic cell surface. Cleaves BIRC6 following inhibition of BIRC6-caspase binding by DIABLO/SMAC. The chain is Caspase-3 (Casp3) from Mus musculus (Mouse).